The primary structure comprises 363 residues: MLARNDDTSSYLLVKPVTKKEIYSNDLENGNVKRGASTHSLYLIGDPKFCRNNSSKQKSIIILCGPTASGKSYLGHELAKAYNGEIINIDSMQVYKEIPIITASPPKSYKTEILYHLYNFLSMTEDFSVIKYLKLATEKIKEITDRGKLPILIGGTGLYINSLVFGYNNIPDISEDLREQVRNLHAKIGNIELWGKLEKLDPLAASKINQNDTQRLIRAYEVFMQTNKSIFSFQTLPKEQILPDFNFKIIFLNPERKFLYKTCDERLDKIFKEGAIDEIALIKKQFAPKDYTNWKAVGIKEILAYLNGNLTLDEALNAAQIRTRQYAKRQVTWFKNQIQDKITLEYTNQEEFTQTLKKPFKTI.

Residue 65–72 (GPTASGKS) coordinates ATP. A substrate-binding site is contributed by 67 to 72 (TASGKS). 2 interaction with substrate tRNA regions span residues 90–93 (DSMQ) and 214–218 (QRLIR).

It belongs to the IPP transferase family. As to quaternary structure, monomer. The cofactor is Mg(2+).

The catalysed reaction is adenosine(37) in tRNA + dimethylallyl diphosphate = N(6)-dimethylallyladenosine(37) in tRNA + diphosphate. Functionally, catalyzes the transfer of a dimethylallyl group onto the adenine at position 37 in tRNAs that read codons beginning with uridine, leading to the formation of N6-(dimethylallyl)adenosine (i(6)A). The protein is tRNA dimethylallyltransferase of Rickettsia massiliae (strain Mtu5).